The sequence spans 165 residues: Neurotrophin-3 (165 aa).

A signal peptide spans 1-3; that stretch reads IQS. The propeptide occupies 4–119; it reads TSMDQGSLSE…VLTXTSXXXR (116 aa).

It belongs to the NGF-beta family.

Its subcellular location is the secreted. Seems to promote the survival of visceral and proprioceptive sensory neurons. The chain is Neurotrophin-3 (NTF3) from Tropidophis haetianus (Haitian dwarf boa).